An 874-amino-acid polypeptide reads, in one-letter code: DNA primase (874 aa).

The segment at 786 to 824 (CLRHTHRASSKNVRVFLVLYYTSQAITVTFMSQCFAGRC) adopts a CHC2-type zinc-finger fold. A compositionally biased stretch (polar residues) spans 848-857 (ASQDSTTSQL). Residues 848–874 (ASQDSTTSQLARRRDRQDGSFSETLPN) are disordered.

This sequence belongs to the herpesviridae DNA primase family. In terms of assembly, associates with the helicase and the primase-associated factor to form the helicase-primase factor.

The protein resides in the host nucleus. Functionally, essential component of the helicase/primase complex. Unwinds the DNA at the replication forks and generates single-stranded DNA for both leading and lagging strand synthesis. The primase initiates primer synthesis and thereby produces large amount of short RNA primers on the lagging strand that the polymerase elongates using dNTPs. This chain is DNA primase, found in Epstein-Barr virus (strain B95-8) (HHV-4).